Reading from the N-terminus, the 408-residue chain is Ribulose bisphosphate carboxylase/oxygenase activase, chloroplastic (408 aa).

The transit peptide at 1–32 (MQVTMKSSAVSGQRVGGARVATRSVRRAQLQV) directs the protein to the chloroplast. 138 to 145 (GGKGQGKT) is a binding site for ATP.

Belongs to the RuBisCO activase family. In terms of assembly, monomer.

Its subcellular location is the plastid. The protein resides in the chloroplast stroma. In terms of biological role, activation of RuBisCO (ribulose-1,5-bisphosphate carboxylase/oxygenase; EC 4.1.1.39) involves the ATP-dependent carboxylation of the epsilon-amino group of lysine leading to a carbamate structure. The chain is Ribulose bisphosphate carboxylase/oxygenase activase, chloroplastic from Chlamydomonas reinhardtii (Chlamydomonas smithii).